A 504-amino-acid polypeptide reads, in one-letter code: Pre-mRNA-processing factor 19 (504 aa).

Position 2 is an N-acetylserine (S2). Residues 2–73 form the U-box domain; the sequence is SLICSISNEV…KPPSATSIPA (72 aa). Residues 68-223 are may mediate interaction with PSMC5; it reads ATSIPAILKA…VGLHSASIPG (156 aa). N6-acetyllysine is present on residues K122, K179, K244, and K261. The stretch at 219–259 is one WD 1 repeat; the sequence is ASIPGILALDLCPSDTNKILTGGADKNVVVFDKSSEQILAT. WD repeat units follow at residues 262–301, 304–345, 348–387, 390–429, 433–472, and 473–503; these read GHTK…CVQV, AHES…TKVT, TSGC…NVAN, GHSG…NFKT, DNNF…LHFT, and EHSG…KFYS.

It belongs to the WD repeat PRP19 family. In terms of assembly, homotetramer. Component of activated, catalytic and post-catalytic spliceosomes. Component of the Prp19 complex/PRP19C/Nineteen complex/NTC and related complexes described as PRP19-CDC5L splicing complex and PSO4 complex. A homotetramer of PRPF19, CDC5L, PLRG1 and BCAS2 constitute the core of those complexes. The interaction with CDC5L, PLRG1 and BCAS2 is direct within this core complex. At least three less stably associated proteins CTNNBL1, CWC15 and HSPA8 are found in the Prp19 complex. The Prp19 complex associates with the spliceosome during its assembly and remodeling recruiting additional proteins. Component of the XAB2 complex, a multimeric protein complex composed of XAB2, PRPF19, AQR, ZNF830, ISY1, and PPIE. Interacts with CWC22 and EIF4A3 in an RNA-independent manner. Interacts with RPA1 and RPA2; the PRP19-CDC5L complex is recruited to the sites of DNA repair where it interacts with the replication protein A complex (RPA). Interacts with SETMAR; required for SETMAR recruitment to site of DNA damage. Interacts with U2AF2; the interaction is direct and recruits the Prp19 complex to RNA polymerase II C-terminal domain (CTD) and the pre-mRNA. Interacts with PRPF3. Interacts with APEX1, DNTT and PSMB4. Interacts with PSMC5. Interacts with KNSTRN. Interacts (via N-terminus) with CDC5L. Interacts with KHDC4. Interacts with USB1. Interacts with DDX41. Ubiquitous. Weakly expressed in senescent cells of different tissue origins. Highly expressed in tumor cell lines.

The protein resides in the nucleus. The protein localises to the nucleoplasm. It is found in the cytoplasm. Its subcellular location is the cytoskeleton. It localises to the spindle. The protein resides in the lipid droplet. The catalysed reaction is S-ubiquitinyl-[E2 ubiquitin-conjugating enzyme]-L-cysteine + [acceptor protein]-L-lysine = [E2 ubiquitin-conjugating enzyme]-L-cysteine + N(6)-ubiquitinyl-[acceptor protein]-L-lysine.. It participates in protein modification; protein ubiquitination. Its function is as follows. Ubiquitin-protein ligase which is a core component of several complexes mainly involved pre-mRNA splicing and DNA repair. Required for pre-mRNA splicing as component of the spliceosome. Core component of the PRP19C/Prp19 complex/NTC/Nineteen complex which is part of the spliceosome and participates in its assembly, its remodeling and is required for its activity. During assembly of the spliceosome, mediates 'Lys-63'-linked polyubiquitination of the U4 spliceosomal protein PRPF3. Ubiquitination of PRPF3 allows its recognition by the U5 component PRPF8 and stabilizes the U4/U5/U6 tri-snRNP spliceosomal complex. Recruited to RNA polymerase II C-terminal domain (CTD) and the pre-mRNA, it may also couple the transcriptional and spliceosomal machineries. The XAB2 complex, which contains PRPF19, is also involved in pre-mRNA splicing, transcription and transcription-coupled repair. Beside its role in pre-mRNA splicing PRPF19, as part of the PRP19-CDC5L complex, plays a role in the DNA damage response/DDR. It is recruited to the sites of DNA damage by the RPA complex where PRPF19 directly ubiquitinates RPA1 and RPA2. 'Lys-63'-linked polyubiquitination of the RPA complex allows the recruitment of the ATR-ATRIP complex and the activation of ATR, a master regulator of the DNA damage response. May also play a role in DNA double-strand break (DSB) repair by recruiting the repair factor SETMAR to altered DNA. As part of the PSO4 complex may also be involved in the DNA interstrand cross-links/ICLs repair process. In addition, may also mediate 'Lys-48'-linked polyubiquitination of substrates and play a role in proteasomal degradation. May play a role in the biogenesis of lipid droplets. May play a role in neural differentiation possibly through its function as part of the spliceosome. This is Pre-mRNA-processing factor 19 from Homo sapiens (Human).